A 140-amino-acid polypeptide reads, in one-letter code: Nucleoside diphosphate kinase (140 aa).

Residues lysine 11, phenylalanine 59, arginine 87, threonine 93, arginine 104, and asparagine 114 each contribute to the ATP site. Histidine 117 (pros-phosphohistidine intermediate) is an active-site residue.

This sequence belongs to the NDK family. In terms of assembly, homotetramer. Mg(2+) is required as a cofactor.

Its subcellular location is the cytoplasm. The enzyme catalyses a 2'-deoxyribonucleoside 5'-diphosphate + ATP = a 2'-deoxyribonucleoside 5'-triphosphate + ADP. It carries out the reaction a ribonucleoside 5'-diphosphate + ATP = a ribonucleoside 5'-triphosphate + ADP. Its function is as follows. Major role in the synthesis of nucleoside triphosphates other than ATP. The ATP gamma phosphate is transferred to the NDP beta phosphate via a ping-pong mechanism, using a phosphorylated active-site intermediate. This is Nucleoside diphosphate kinase from Mesorhizobium japonicum (strain LMG 29417 / CECT 9101 / MAFF 303099) (Mesorhizobium loti (strain MAFF 303099)).